The chain runs to 589 residues: L-fucose isomerase (589 aa).

Active-site proton acceptor residues include Glu-340 and Asp-364. Positions 340, 364, and 527 each coordinate Mn(2+).

The protein belongs to the L-fucose isomerase family. It depends on Mn(2+) as a cofactor.

It localises to the cytoplasm. The enzyme catalyses L-fucose = L-fuculose. It participates in carbohydrate degradation; L-fucose degradation; L-lactaldehyde and glycerone phosphate from L-fucose: step 1/3. Functionally, converts the aldose L-fucose into the corresponding ketose L-fuculose. In Haemophilus influenzae (strain ATCC 51907 / DSM 11121 / KW20 / Rd), this protein is L-fucose isomerase.